A 24-amino-acid chain; its full sequence is Formate ester dehydrogenase gamma chain (24 aa).

Heterotrimer composed of an alpha, a beta and a gamma chain.

This is Formate ester dehydrogenase gamma chain from Amycolatopsis methanolica.